Reading from the N-terminus, the 184-residue chain is Protein GrpE (184 aa).

Acidic residues predominate over residues methionine 1–glutamate 10. The segment at methionine 1–valine 22 is disordered.

It belongs to the GrpE family. In terms of assembly, homodimer.

The protein localises to the cytoplasm. In terms of biological role, participates actively in the response to hyperosmotic and heat shock by preventing the aggregation of stress-denatured proteins, in association with DnaK and GrpE. It is the nucleotide exchange factor for DnaK and may function as a thermosensor. Unfolded proteins bind initially to DnaJ; upon interaction with the DnaJ-bound protein, DnaK hydrolyzes its bound ATP, resulting in the formation of a stable complex. GrpE releases ADP from DnaK; ATP binding to DnaK triggers the release of the substrate protein, thus completing the reaction cycle. Several rounds of ATP-dependent interactions between DnaJ, DnaK and GrpE are required for fully efficient folding. The protein is Protein GrpE of Chlamydia pneumoniae (Chlamydophila pneumoniae).